A 370-amino-acid chain; its full sequence is MKVTILASAILALINGALALPANTPTLDVTLTQVDNTRIKATVKNTGNEKVTFVHLNFFQDAAPVKKVSLFRNATEVEFTGIKRRLLTEGLSDDALTTLAPGATFEDEFDVASTADLTEGGTVTIRTDGFVPITTDRKVSGYIPYQSNELEIEVDAAKAAAVPQAIKLLDRRTKVASCSGSRASALSTALRNAASLANAAASAASSGSSTRFQEYFKTTSSSTRNTVAARFRAVASEASSQSSGKTTYYCTDPYGYCDSNTLAYTLPSSNLIANCDIYYSYLPALTSSCHAQDQATTTLHEFTHAPAVYSPGTDDYAYGYRASTALSASQALLNADTYALFANGTPPPPPSPLHIHFQMLDTNNGYSREP.

The first 19 residues, 1-19 (MKVTILASAILALINGALA), serve as a signal peptide directing secretion. A propeptide spanning residues 20–172 (LPANTPTLDV…PQAIKLLDRR (153 aa)) is cleaved from the precursor. Cystine bridges form between Cys178/Cys250 and Cys257/Cys275. His300 serves as a coordination point for Zn(2+). Glu301 is a catalytic residue. Residues His304 and Asp315 each contribute to the Zn(2+) site.

The protein belongs to the peptidase M35 family. Zn(2+) is required as a cofactor.

The protein resides in the secreted. It carries out the reaction Preferential cleavage of bonds with hydrophobic residues in P1'. Also 3-Asn-|-Gln-4 and 8-Gly-|-Ser-9 bonds in insulin B chain.. Functionally, secreted metalloproteinase that allows assimilation of proteinaceous substrates. Shows high activities on basic nuclear substrates such as histone and protamine. May be involved in virulence. The polypeptide is Neutral protease 2 homolog AFUA_4G13750 (Aspergillus fumigatus (strain ATCC MYA-4609 / CBS 101355 / FGSC A1100 / Af293) (Neosartorya fumigata)).